The chain runs to 157 residues: Putative pre-16S rRNA nuclease (157 aa).

It belongs to the YqgF nuclease family.

It localises to the cytoplasm. In terms of biological role, could be a nuclease involved in processing of the 5'-end of pre-16S rRNA. This is Putative pre-16S rRNA nuclease from Nitrosomonas eutropha (strain DSM 101675 / C91 / Nm57).